The following is a 117-amino-acid chain: Cuticle protein CP1246 (117 aa).

Repeat copies occupy residues 1-17 (NYGE…LVQF), 26-43 (AEIG…HVQF), 67-84 (QSYG…NRQF), and 93-110 (VLVG…NVQF).

Calcified shell.

This is Cuticle protein CP1246 from Cancer pagurus (Rock crab).